We begin with the raw amino-acid sequence, 393 residues long: Pyridoxamine--pyruvate transaminase (393 aa).

Residues E68, Y95, and T146 each coordinate pyridoxal 5'-phosphate. Position 197 is an N6-(pyridoxal phosphate)lysine (K197). A pyridoxal 5'-phosphate-binding site is contributed by R345.

Belongs to the class-V pyridoxal-phosphate-dependent aminotransferase family. As to quaternary structure, homotetramer. Requires pyridoxal 5'-phosphate as cofactor.

The enzyme catalyses pyridoxamine + pyruvate = pyridoxal + L-alanine. Functionally, catalyzes a reversible transamination reaction between pyridoxamine and pyruvate to form pyridoxal and L-alanine. The chain is Pyridoxamine--pyruvate transaminase (ppaT) from Mesorhizobium japonicum (strain LMG 29417 / CECT 9101 / MAFF 303099) (Mesorhizobium loti (strain MAFF 303099)).